A 57-amino-acid chain; its full sequence is Protein GnsA (57 aa).

Belongs to the gns family.

In Escherichia coli O6:H1 (strain CFT073 / ATCC 700928 / UPEC), this protein is Protein GnsA (gnsA).